We begin with the raw amino-acid sequence, 149 residues long: Transcriptional repressor NrdR (149 aa).

The segment at 3–34 is a zinc-finger region; that stretch reads CPFCFAVDTKVIDSRLVGGGSSVRRRRQCLVC. In terms of domain architecture, ATP-cone spans 49-139; that stretch reads PRVVKSNDVR…VYRSFEDIKE (91 aa).

It belongs to the NrdR family. The cofactor is Zn(2+).

Functionally, negatively regulates transcription of bacterial ribonucleotide reductase nrd genes and operons by binding to NrdR-boxes. The protein is Transcriptional repressor NrdR of Shigella boydii serotype 18 (strain CDC 3083-94 / BS512).